The sequence spans 436 residues: 3-ketoacyl-CoA thiolase (436 aa).

The Acyl-thioester intermediate role is filled by C99. Catalysis depends on proton acceptor residues H392 and C422.

The protein belongs to the thiolase-like superfamily. Thiolase family. Heterotetramer of two alpha chains (FadJ) and two beta chains (FadI).

The protein localises to the cytoplasm. It carries out the reaction an acyl-CoA + acetyl-CoA = a 3-oxoacyl-CoA + CoA. It participates in lipid metabolism; fatty acid beta-oxidation. Catalyzes the final step of fatty acid oxidation in which acetyl-CoA is released and the CoA ester of a fatty acid two carbons shorter is formed. This chain is 3-ketoacyl-CoA thiolase, found in Shewanella baltica (strain OS155 / ATCC BAA-1091).